The primary structure comprises 349 residues: Alanine racemase (349 aa).

Lysine 35 (proton acceptor; specific for D-alanine) is an active-site residue. N6-(pyridoxal phosphate)lysine is present on lysine 35. Arginine 130 is a substrate binding site. Residue tyrosine 244 is the Proton acceptor; specific for L-alanine of the active site. Residue methionine 292 coordinates substrate.

The protein belongs to the alanine racemase family. The cofactor is pyridoxal 5'-phosphate.

The catalysed reaction is L-alanine = D-alanine. It participates in amino-acid biosynthesis; D-alanine biosynthesis; D-alanine from L-alanine: step 1/1. Catalyzes the interconversion of L-alanine and D-alanine. May also act on other amino acids. This Cereibacter sphaeroides (strain KD131 / KCTC 12085) (Rhodobacter sphaeroides) protein is Alanine racemase (alr).